Reading from the N-terminus, the 189-residue chain is Probable nicotinate-nucleotide adenylyltransferase (189 aa).

Belongs to the NadD family.

The catalysed reaction is nicotinate beta-D-ribonucleotide + ATP + H(+) = deamido-NAD(+) + diphosphate. The protein operates within cofactor biosynthesis; NAD(+) biosynthesis; deamido-NAD(+) from nicotinate D-ribonucleotide: step 1/1. Catalyzes the reversible adenylation of nicotinate mononucleotide (NaMN) to nicotinic acid adenine dinucleotide (NaAD). The polypeptide is Probable nicotinate-nucleotide adenylyltransferase (Bacillus mycoides (strain KBAB4) (Bacillus weihenstephanensis)).